The primary structure comprises 348 residues: Trace amine-associated receptor 9 (348 aa).

Over 1 to 33 (MVNNFSQAEAVELCYKNVNESCIKTPYSPGPRS) the chain is Extracellular. 2 N-linked (GlcNAc...) asparagine glycosylation sites follow: asparagine 4 and asparagine 19. 2 disulfides stabilise this stretch: cysteine 22/cysteine 186 and cysteine 105/cysteine 190. A helical membrane pass occupies residues 34-58 (ILYAVLGFGAVLAAFGNLLVMIAIL). The Cytoplasmic segment spans residues 59-68 (HFKQLHTPTN). Residues 69–90 (FLIASLACADFLVGVTVMPFST) traverse the membrane as a helical segment. Residues 91-105 (VRSVESCWYFGDSYC) lie on the Extracellular side of the membrane. Residues 106-128 (KFHTCFDTSFCFASLFHLCCISV) form a helical membrane-spanning segment. Spermidine-binding residues include aspartate 112 and threonine 113. Residues 129-148 (DRYIAVTDPLTYPTKFTVSV) are Cytoplasmic-facing. The chain crosses the membrane as a helical span at residues 149–170 (SGICIVLSWFFSVTYSFSIFYT). Residues 171–196 (GANEEGIEELVVALTCVGGCQAPLNQ) are Extracellular-facing. Positions 174–187 (EEGIEELVVALTCV) are extracellular Loop 2 (ECL2). A helical membrane pass occupies residues 197-218 (NWVLLCFLLFFIPNVAMVFIYS). At 219 to 256 (KIFLVAKHQARKIESTASQAQSSSESYKERVAKRERKA) the chain is on the cytoplasmic side. A helical membrane pass occupies residues 257–280 (AKTLGIAMAAFLVSWLPYLVDAVI). Over 281-293 (DAYMNFITPPYVY) the chain is Extracellular. A helical transmembrane segment spans residues 294–314 (EILVWCVYYNSAMNPLIYAFF). The Cytoplasmic segment spans residues 315-348 (YQWFGKAIKLIVSGKVLRTDSSTTNLFSEEVETD).

The protein belongs to the G-protein coupled receptor 1 family.

Its subcellular location is the cell membrane. Functionally, olfactory receptor specific for trace amines, such as N,N-dimethylcyclohexylamine (DMCHA) and beta-phenylethylamine (beta-PEA). In contrast to mouse and rat orthologs, not activated by triethylamine, cadaverine (CAD) or spermidine. Trace amine compounds are enriched in animal body fluids and act on trace amine-associated receptors (TAARs) to elicit both intraspecific and interspecific innate behaviors. Trace amine-binding causes a conformation change that triggers signaling via G(s)-class of G alpha proteins (GNAL or GNAS). In mature olfactory sensory neurons, TAAR9 is coupled with GNAL/G(olf)G alpha protein and mediates activation of adenylate cyclase activity to activate cAMP signaling and eventually transmit odorant signals to achieve membrane depolarization. In immature olfactory sensory neurons, TAAR9 is coupled with GNAS/G(s) G alpha proteins. This is Trace amine-associated receptor 9 from Homo sapiens (Human).